The chain runs to 591 residues: Inactive metallocarboxypeptidase ECM14 (591 aa).

A signal peptide spans 1-21 (MRLFAHLAVLAILACAVPITA). The propeptide occupies 22–175 (IPSFLSNSYP…QTIYESYPSS (154 aa)). The Peptidase M14 domain maps to 203–523 (DYQPFSVIVP…NAVMVLGRFL (321 aa)). Zn(2+)-binding residues include histidine 265 and glutamate 268. Substrate-binding positions include 265–268 (HARE), arginine 323, and 340–341 (DR). A disulfide bond links cysteine 334 and cysteine 357. Residues asparagine 350, asparagine 381, and asparagine 386 are each glycosylated (N-linked (GlcNAc...) asparagine). Residue histidine 397 coordinates Zn(2+). 398–399 (SY) is a binding site for substrate. A disordered region spans residues 533–591 (DWEDESQRPKAGEDDIPSDNELDENDDSWIPYDYRNHDDQNEGEGYDNDEWGFRRRRKR). Composition is skewed to acidic residues over residues 546-559 (DDIP…ENDD) and 573-582 (NEGEGYDNDE).

This sequence belongs to the peptidase M14 family. It depends on Zn(2+) as a cofactor.

The protein resides in the vacuole. It is found in the secreted. Functionally, inactive carboxypeptidase that may play a role in cell wall organization and biogenesis. This Paracoccidioides brasiliensis (strain Pb03) protein is Inactive metallocarboxypeptidase ECM14 (ECM14).